The chain runs to 66 residues: U10-theraphotoxin-Cg1a 1 (66 aa).

An N-terminal signal peptide occupies residues M1–A21. Positions A22 to R29 are excised as a propeptide. 3 disulfide bridges follow: C31–C46, C38–C51, and C45–C58.

Belongs to the neurotoxin 10 (Hwtx-1) family. 29 (Jztx-13) subfamily. As to expression, expressed by the venom gland.

The protein localises to the secreted. In terms of biological role, probable ion channel inhibitor. This chain is U10-theraphotoxin-Cg1a 1, found in Chilobrachys guangxiensis (Chinese earth tiger tarantula).